The following is a 1213-amino-acid chain: DNA-directed RNA polymerase subunit beta (1213 aa).

Residues 1169–1213 (SRMAEEQEKKKLAEETGKSGDKKENKKDADKPVAPADESDDKVSK) form a disordered region. The segment covering 1171–1199 (MAEEQEKKKLAEETGKSGDKKENKKDADK) has biased composition (basic and acidic residues).

The protein belongs to the RNA polymerase beta chain family. In terms of assembly, the RNAP catalytic core consists of 2 alpha, 1 beta, 1 beta' and 1 omega subunit. When a sigma factor is associated with the core the holoenzyme is formed, which can initiate transcription.

It catalyses the reaction RNA(n) + a ribonucleoside 5'-triphosphate = RNA(n+1) + diphosphate. Functionally, DNA-dependent RNA polymerase catalyzes the transcription of DNA into RNA using the four ribonucleoside triphosphates as substrates. The polypeptide is DNA-directed RNA polymerase subunit beta (Lactobacillus helveticus (strain DPC 4571)).